The chain runs to 371 residues: Cytochrome b (371 aa).

4 helical membrane passes run 25 to 45 (FGSM…FLAV), 69 to 90 (WMMQ…YIHI), 105 to 125 (WLSG…GYVL), and 170 to 190 (FFAL…LHIM). His75 and His89 together coordinate heme b. Residues His174 and His188 each contribute to the heme b site. His193 contributes to the a ubiquinone binding site. The next 4 membrane-spanning stretches (helical) occupy residues 218 to 238 (YKDL…VSFL), 280 to 300 (LWGA…PFTH), 312 to 332 (IMQL…WAAT), and 339 to 358 (FTMI…IMNP).

Belongs to the cytochrome b family. In terms of assembly, the cytochrome bc1 complex contains 3 respiratory subunits (MT-CYB, CYC1 and UQCRFS1), 2 core proteins (UQCRC1 and UQCRC2) and probably 6 low-molecular weight proteins. Heme b is required as a cofactor.

It localises to the mitochondrion inner membrane. Functionally, component of the ubiquinol-cytochrome c reductase complex (complex III or cytochrome b-c1 complex) that is part of the mitochondrial respiratory chain. The b-c1 complex mediates electron transfer from ubiquinol to cytochrome c. Contributes to the generation of a proton gradient across the mitochondrial membrane that is then used for ATP synthesis. This Eryx miliaris nogaiorum (Black sand boa) protein is Cytochrome b (MT-CYB).